Consider the following 263-residue polypeptide: MQGRTPLLETLRELECEIRLLTVYARECCGCYEILRRKLDRLSGLIGEDCSRAQWQADSDDPALQALGLRLRDAAVQALCELEKHLCQGVLHEPGEMGRYLGSLLESIRGELDSAGIDADARVLFVGSGALPTSALVLAREVGAHLCCLDIDEEALGYAREIARCQGLEARMQFSSLPPAELAFSRDATHFLIASLVQQKSAVLAQIRQVMRADAKVLLRHGSGIKGLFNYPVEPAELEGWQVCAERVSQPLYDTLILEKAGR.

Belongs to the methyltransferase superfamily. CntL family. Interacts with CntM.

The enzyme catalyses L-histidine + S-adenosyl-L-methionine = (2S)-2-amino-4-{[(1S)-1-carboxy-2-(1H-imidazol-4-yl)ethyl]amino}butanoate + S-methyl-5'-thioadenosine + H(+). In terms of biological role, catalyzes the nucleophilic attack of one alpha-aminobutanoate moiety from SAM onto L-histidine to produce the intermediate (2S)-2-amino-4-{[(1S)-1-carboxy-2-(1H-imidazol-4-yl)ethyl]amino}butanoate. Functions in the biosynthesis of the metallophore pseudopaline, which is involved in the acquisition of nickel and zinc, and thus enables bacterial growth inside the host, where metal access is limited. Therefore, this enzyme probably contributes to Pseudomonas virulence. Cannot use D-histidine in place of L-histidine as substrate. The sequence is that of L-histidine 2-aminobutanoyltransferase from Pseudomonas aeruginosa (strain UCBPP-PA14).